The following is a 446-amino-acid chain: MMITLRKLPLAVAVAAGVMSAQAMAVDFHGYARSGIGWTGSGGEQQCFQTTGAQSKYRLGNECETYAELKLGQEVWKEGDKSFYFDTNVAYSVAQQNDWEATDPAFREANVQGKNLIEWLPGSTIWAGKRFYQRHDVHMIDFYYWDISGPGAGLENIDVGFGKLSLAATRSSEAGGSSSFASNNIYDYTNETANDVFDVRLAQMEINPGGTLELGVDYGRANLRDNYRLVDGASKDGWLFTAEHTQSVLKGFNKFVVQYATDSMTSQGKGLSQGSGVAFDNEKFAYNINNNGHMLRILDHGAISMGDNWDMMYVGMYQDINWDNDNGTKWWTVGIRPMYKWTPIMSTVMEIGYDNVESQRTGDKNNQYKITLAQQWQAGDSIWSRPAIRVFATYAKWDEKWGYDYTGNADNNANFGKAVPADFNGGSFGRGDSDEWTFGAQMEIWW.

Positions 1 to 25 (MMITLRKLPLAVAVAAGVMSAQAMA) are cleaved as a signal peptide.

Belongs to the porin LamB (TC 1.B.3) family. As to quaternary structure, homotrimer formed of three 18-stranded antiparallel beta-barrels, containing three independent channels.

It localises to the cell outer membrane. It carries out the reaction beta-maltose(in) = beta-maltose(out). Its function is as follows. Involved in the transport of maltose and maltodextrins. This Escherichia coli (strain K12 / MC4100 / BW2952) protein is Maltoporin.